We begin with the raw amino-acid sequence, 511 residues long: Protein phosphatase 2C 7 (511 aa).

The signal sequence occupies residues 1-19 (MEEISPAVALTLGLANTMC). Positions 188–501 (LWGTISICGG…DNISIIVIDL (314 aa)) constitute a PPM-type phosphatase domain. The Mn(2+) site is built by aspartate 242, glycine 243, aspartate 432, and aspartate 492.

This sequence belongs to the PP2C family. Interacts with PYL13. Requires Mg(2+) as cofactor. Mn(2+) serves as cofactor. In terms of tissue distribution, expressed in seeds.

The enzyme catalyses O-phospho-L-seryl-[protein] + H2O = L-seryl-[protein] + phosphate. It catalyses the reaction O-phospho-L-threonyl-[protein] + H2O = L-threonyl-[protein] + phosphate. Its function is as follows. Key component and repressor of the abscisic acid (ABA) signaling pathway that regulates numerous ABA responses, such as stomatal closure, seed germination and inhibition of vegetative growth. This Arabidopsis thaliana (Mouse-ear cress) protein is Protein phosphatase 2C 7 (HAB2).